A 79-amino-acid chain; its full sequence is Sulfur carrier protein TusA (79 aa).

The active-site Cysteine persulfide intermediate is the cysteine 17.

Belongs to the sulfur carrier protein TusA family.

The protein localises to the cytoplasm. In terms of biological role, sulfur carrier protein which probably makes part of a sulfur-relay system. The protein is Sulfur carrier protein TusA of Haemophilus influenzae (strain ATCC 51907 / DSM 11121 / KW20 / Rd).